The primary structure comprises 212 residues: Cytidylate kinase (212 aa).

7–15 is a binding site for ATP; that stretch reads GPAASGKGT.

This sequence belongs to the cytidylate kinase family. Type 1 subfamily.

The protein resides in the cytoplasm. The enzyme catalyses CMP + ATP = CDP + ADP. It carries out the reaction dCMP + ATP = dCDP + ADP. This Bradyrhizobium diazoefficiens (strain JCM 10833 / BCRC 13528 / IAM 13628 / NBRC 14792 / USDA 110) protein is Cytidylate kinase.